The primary structure comprises 385 residues: Methionyl-tRNA formyltransferase, mitochondrial (385 aa).

It belongs to the Fmt family.

The protein localises to the mitochondrion. It catalyses the reaction L-methionyl-tRNA(fMet) + (6R)-10-formyltetrahydrofolate = N-formyl-L-methionyl-tRNA(fMet) + (6S)-5,6,7,8-tetrahydrofolate + H(+). Methionyl-tRNA formyltransferase that formylates methionyl-tRNA in mitochondria and is crucial for translation initiation. The protein is Methionyl-tRNA formyltransferase, mitochondrial (Mtfmt) of Rattus norvegicus (Rat).